The sequence spans 230 residues: Cyclin-dependent kinase inhibitor rum1 (230 aa).

Disordered stretches follow at residues 1–25 (MEPSTPPMRGLCTPSTPESPGSFKG), 43–118 (PESD…DGLY), and 188–230 (SRVP…NLLR). Residue Thr13 is modified to Phosphothreonine; by MAPK. A Phosphoserine; by MAPK modification is found at Ser19. A phosphothreonine; by cdc2 mark is found at Thr58 and Thr62. The CDK inhibitory and cyclin-binding stretch occupies residues 67–147 (LLPNLMLQDR…TFKPKLLFAD (81 aa)). Residues 78 to 91 (NSLERCMEEDREHN) show a composition bias toward basic and acidic residues. The segment covering 93 to 102 (FLSSSDNQLL) has biased composition (polar residues). Positions 101-230 (LLSRKKRKPT…KDENRHNLLR (130 aa)) are required for activity as a cdc2 kinase inhibitor. The span at 188–199 (SRVPSSSSGSFV) shows a compositional bias: low complexity. A compositionally biased stretch (basic and acidic residues) spans 219 to 230 (NTKDENRHNLLR).

In terms of assembly, interacts with cdc13, cig2 and pop1. Phosphorylated by cig1-associated cdc2 which leads to increased stability. Phosphorylation by MAPK reduces cdc2 kinase inhibitor ability.

The protein resides in the nucleus. Functionally, regulator of cell cycle G1 phase progression. Ensures the correct sequence of S phase and mitosis in the cell by acting as an inhibitor of the cdc2 mitotic kinase. Probably interacts with cdc2 to inhibit its action until the cell mass for Start is reached. Determines the length of the pre-Start G1 period and prevents mitosis from happening in early G1 cells. Required for maintaining pheromone-induced G1 arrest. Acts as an adapter protein since interaction with cdc13 promotes cyclin proteolysis during G1. Becomes a target for degradation at the G1/S phase transition, following phosphorylation by cig1-associated cdc2 at the G1/S phase transition. The polypeptide is Cyclin-dependent kinase inhibitor rum1 (rum1) (Schizosaccharomyces pombe (strain 972 / ATCC 24843) (Fission yeast)).